A 231-amino-acid polypeptide reads, in one-letter code: 5'-methylthioadenosine/S-adenosylhomocysteine nucleosidase (231 aa).

Glu-12 acts as the Proton acceptor in catalysis. Residues Gly-78, Val-153, and 174-175 (ME) contribute to the substrate site. Asp-198 (proton donor) is an active-site residue.

The protein belongs to the PNP/UDP phosphorylase family. MtnN subfamily.

It carries out the reaction S-adenosyl-L-homocysteine + H2O = S-(5-deoxy-D-ribos-5-yl)-L-homocysteine + adenine. The enzyme catalyses S-methyl-5'-thioadenosine + H2O = 5-(methylsulfanyl)-D-ribose + adenine. It catalyses the reaction 5'-deoxyadenosine + H2O = 5-deoxy-D-ribose + adenine. It functions in the pathway amino-acid biosynthesis; L-methionine biosynthesis via salvage pathway; S-methyl-5-thio-alpha-D-ribose 1-phosphate from S-methyl-5'-thioadenosine (hydrolase route): step 1/2. Its function is as follows. Catalyzes the irreversible cleavage of the glycosidic bond in both 5'-methylthioadenosine (MTA) and S-adenosylhomocysteine (SAH/AdoHcy) to adenine and the corresponding thioribose, 5'-methylthioribose and S-ribosylhomocysteine, respectively. Also cleaves 5'-deoxyadenosine, a toxic by-product of radical S-adenosylmethionine (SAM) enzymes, into 5-deoxyribose and adenine. This is 5'-methylthioadenosine/S-adenosylhomocysteine nucleosidase from Aliivibrio fischeri (strain MJ11) (Vibrio fischeri).